A 1034-amino-acid chain; its full sequence is Platelet endothelial aggregation receptor 1 (1034 aa).

The first 18 residues, 1–18 (MPLCPLLLLALGLRLTGT), serve as a signal peptide directing secretion. The Extracellular portion of the chain corresponds to 19-754 (LNSNDPNVCT…PTSPVTHNSL (736 aa)). The EMI domain maps to 23–101 (DPNVCTFWES…YYESRGACVP (79 aa)). Disulfide bonds link Cys-27-Cys-89, Cys-53-Cys-63, and Cys-88-Cys-99. N-linked (GlcNAc...) asparagine glycosylation is present at Asn-150. EGF-like domains are found at residues 181–215 (YGPA…PSCN), 223–258 (DGFF…VICS), 266–301 (HGPN…DRCQ), 309–344 (FGQD…DRCT), and 398–433 (HGPG…PHCA). 5 disulfides stabilise this stretch: Cys-185–Cys-196, Cys-189–Cys-203, Cys-205–Cys-214, Cys-233–Cys-246, and Cys-248–Cys-257. Asn-269 carries N-linked (GlcNAc...) asparagine glycosylation. Intrachain disulfides connect Cys-270–Cys-282, Cys-276–Cys-289, Cys-291–Cys-300, Cys-313–Cys-325, Cys-319–Cys-332, Cys-334–Cys-343, Cys-402–Cys-414, Cys-408–Cys-421, and Cys-423–Cys-432. Asn-474 carries N-linked (GlcNAc...) asparagine glycosylation. EGF-like domains lie at 484-519 (WGFN…AHCQ), 575-605 (SNTC…PSCQ), 613-648 (YGKR…PDCS), and 656-691 (WGLK…PNCL). Cystine bridges form between Cys-488–Cys-500, Cys-494–Cys-507, Cys-509–Cys-518, Cys-578–Cys-586, Cys-580–Cys-593, Cys-595–Cys-604, Cys-617–Cys-629, Cys-622–Cys-636, Cys-638–Cys-647, Cys-660–Cys-672, Cys-666–Cys-679, and Cys-681–Cys-690. The helical transmembrane segment at 755–775 (GAVIGIAVLGTLVVALIALFI) threads the bilayer. Topologically, residues 776–1034 (GYRQWQKGKE…PSPPSRRQDR (259 aa)) are cytoplasmic. The disordered stretch occupies residues 823-883 (TLSQCSPNPP…PHERGASHLD (61 aa)). A compositionally biased stretch (basic and acidic residues) spans 851–883 (RPSRAHGRENHVTLPADWKHRREPHERGASHLD). Tyr-923 bears the Phosphotyrosine mark. A disordered region spans residues 925–1034 (TIRDLPSLPG…PSPPSRRQDR (110 aa)). Ser-951 bears the Phosphoserine mark. Positions 972–991 (DSGTYEQPSPLSHNEESLGS) are enriched in polar residues. Ser-1026 is subject to Phosphoserine.

The protein belongs to the MEGF family. In terms of assembly, interacts with SHC2 upon its aggregation-induced tyrosine phosphorylation. Interacts (via extracellular domain) with SVEP1. Post-translationally, phosphorylated in the intracellular domain on tyrosine residues. Phosphorylated on tyrosine residues by SRC. Tyrosine phosphorylation is detected upon platelet aggregation stimulated by collagen, TRAP and thrombin and platelet-platelet contacts but not after platelet activation. Tyrosine phosphorylation enhanced its association with SHC1 and SHC2. Phosphorylated in the intracellular domain on tyrosine residues. Phosphorylated when in the presence of SVEP1. As to expression, expressed in thymocytes, bone marrow stromal and osteogenic cells (at protein level). Strongly expressed in kidney and heart. Moderately expressed in lung, spleen, thymus, liver, brain, testis, skin and stomach. Expressed in hematopoietic stem progenitor cells.

The protein localises to the cell membrane. Its subcellular location is the cell projection. It localises to the lamellipodium. Its function is as follows. Required for SVEP1-mediated platelet activation, via its interaction with SVEP1 and subsequent activation of AKT/mTOR signaling. May be involved in the early stages of hematopoiesis. This chain is Platelet endothelial aggregation receptor 1 (Pear1), found in Mus musculus (Mouse).